We begin with the raw amino-acid sequence, 289 residues long: Oxaloacetate decarboxylase (289 aa).

Ser-50 is a substrate binding site. Asp-88 contributes to the Mg(2+) binding site. Residues Arg-159 and His-235 each coordinate substrate.

The protein belongs to the isocitrate lyase family. Oxaloacetate decarboxylase subfamily. Homotetramer; dimer of dimers. Requires Mg(2+) as cofactor.

It catalyses the reaction oxaloacetate + H(+) = pyruvate + CO2. Catalyzes the decarboxylation of oxaloacetate into pyruvate. Seems to play a role in maintaining cellular concentrations of bicarbonate and pyruvate. This is Oxaloacetate decarboxylase from Pseudomonas fluorescens (strain SBW25).